Reading from the N-terminus, the 281-residue chain is Pantothenate synthetase (281 aa).

Met31–His38 contributes to the ATP binding site. The active-site Proton donor is His38. Residue Gln62 coordinates (R)-pantoate. Gln62 is a binding site for beta-alanine. ATP is bound at residue Gly150–Asp153. Position 156 (Gln156) interacts with (R)-pantoate. ATP-binding positions include Val179 and Met187 to Arg190.

This sequence belongs to the pantothenate synthetase family. Homodimer.

It localises to the cytoplasm. The catalysed reaction is (R)-pantoate + beta-alanine + ATP = (R)-pantothenate + AMP + diphosphate + H(+). It functions in the pathway cofactor biosynthesis; (R)-pantothenate biosynthesis; (R)-pantothenate from (R)-pantoate and beta-alanine: step 1/1. In terms of biological role, catalyzes the condensation of pantoate with beta-alanine in an ATP-dependent reaction via a pantoyl-adenylate intermediate. The protein is Pantothenate synthetase of Xylella fastidiosa (strain 9a5c).